A 429-amino-acid chain; its full sequence is Glutamate-1-semialdehyde 2,1-aminomutase 2 (429 aa).

K268 bears the N6-(pyridoxal phosphate)lysine mark.

The protein belongs to the class-III pyridoxal-phosphate-dependent aminotransferase family. HemL subfamily. Homodimer. Requires pyridoxal 5'-phosphate as cofactor.

It is found in the cytoplasm. The enzyme catalyses (S)-4-amino-5-oxopentanoate = 5-aminolevulinate. It participates in porphyrin-containing compound metabolism; protoporphyrin-IX biosynthesis; 5-aminolevulinate from L-glutamyl-tRNA(Glu): step 2/2. This Bacillus cereus (strain AH187) protein is Glutamate-1-semialdehyde 2,1-aminomutase 2.